We begin with the raw amino-acid sequence, 37 residues long: DDDCGWIMDDCTSDSDCCPNWVCSKTGFVKNICKYEM.

3 disulfide bridges follow: cysteine 4–cysteine 18, cysteine 11–cysteine 23, and cysteine 17–cysteine 33.

Expressed by the venom gland.

The protein localises to the secreted. In terms of biological role, blocks calcium channels (Cav). This chain is Omega-sparatoxin-Hv1a, found in Heteropoda venatoria (Brown huntsman spider).